A 280-amino-acid polypeptide reads, in one-letter code: Fructose-1,6-bisphosphatase class 1 (280 aa).

Mg(2+) is bound by residues Glu-64, Asp-83, Leu-85, and Asp-86. Residues Asp-86–Ser-89, Tyr-189, and Lys-220 each bind substrate. Glu-226 lines the Mg(2+) pocket.

Belongs to the FBPase class 1 family. As to quaternary structure, homotetramer. It depends on Mg(2+) as a cofactor.

The protein localises to the cytoplasm. The enzyme catalyses beta-D-fructose 1,6-bisphosphate + H2O = beta-D-fructose 6-phosphate + phosphate. The protein operates within carbohydrate biosynthesis; gluconeogenesis. The protein is Fructose-1,6-bisphosphatase class 1 of Campylobacter jejuni subsp. doylei (strain ATCC BAA-1458 / RM4099 / 269.97).